A 430-amino-acid chain; its full sequence is MKQALRVAFGFLMLWAAMLHAEVRIVIDGGVDSGRPIGVVPFKWAGPGAAPEDIGGIVSDDLRYSGKFNPLDRARLPQQPASAQEVQPAAWSALAIDAVVVGQVTPNPDGSYNVTYQLVDTGGAPGTVLAQNSFKVNKQWLRYAAHTVSDEVFEKLTGIKGAFRTRLAYVVQTNGGQFPYELRVSDYDGYNPFVVHRSPQPLMSPAWSPDGSKLAYVTFESGRSELVIQTLANGAIRKVASFPRHNGAPAFSPDGSKLAFALSKTGSLNLYVMDLASGQIRQITDGRSNNTEPTWFPDSQNLAFTSDQAGRPQVYKVNINGGAPQRITWEGTQNQDADVSSDGKFMVMVSSDGGKQHIAKQDLVTGGVQVLSSTFLDETPSLAPNGTMVIYSSSQGMGSVLNLVSTDGRFKARLPATDGQVKFPAWSPYL.

Residues 1 to 21 (MKQALRVAFGFLMLWAAMLHA) form the signal peptide.

Belongs to the TolB family. The Tol-Pal system is composed of five core proteins: the inner membrane proteins TolA, TolQ and TolR, the periplasmic protein TolB and the outer membrane protein Pal. They form a network linking the inner and outer membranes and the peptidoglycan layer.

The protein localises to the periplasm. Functionally, part of the Tol-Pal system, which plays a role in outer membrane invagination during cell division and is important for maintaining outer membrane integrity. TolB occupies a key intermediary position in the Tol-Pal system because it communicates directly with both membrane-embedded components, Pal in the outer membrane and TolA in the inner membrane. In Escherichia fergusonii (strain ATCC 35469 / DSM 13698 / CCUG 18766 / IAM 14443 / JCM 21226 / LMG 7866 / NBRC 102419 / NCTC 12128 / CDC 0568-73), this protein is Tol-Pal system protein TolB.